We begin with the raw amino-acid sequence, 149 residues long: Large ribosomal subunit protein bL9 (149 aa).

The protein belongs to the bacterial ribosomal protein bL9 family.

In terms of biological role, binds to the 23S rRNA. This Helicobacter acinonychis (strain Sheeba) protein is Large ribosomal subunit protein bL9.